The sequence spans 443 residues: FLYWCH-type zinc finger-containing protein peb-1 (443 aa).

The disordered stretch occupies residues 22-49 (KPGSSDISSSSTDTSAISPISVSSMPLS). Low complexity predominate over residues 25–42 (SSDISSSSTDTSAISPIS). Residues 46–203 (MPLSPDKEKK…RNKDGKPKKP (158 aa)) constitute a DNA-binding region (required for DNA-binding). An FLYWCH-type zinc finger spans residues 69–135 (IVTSFKGYQK…NACTKGSHNH (67 aa)). Residues 251-271 (PTIQIPQPIPTPIQHQQQEQS) are disordered.

Its subcellular location is the nucleus. Putative transcription factor. Binds to specific sequence motif 5'-[TC][AGT]TGCC[GA][AT]-3' in regulatory elements of target genes such as myosin myo-2. May modulate gene expression, perhaps acting in opposition to transcription factor pha-4. Involved in morphogenesis, perhaps especially in formation of the pharynx. Plays roles in molting, feeding and morphology. This chain is FLYWCH-type zinc finger-containing protein peb-1, found in Caenorhabditis elegans.